Reading from the N-terminus, the 684-residue chain is Fermitin family homolog 2 (684 aa).

Positions 40–81 (HIGGVMLKLVEKLDVKKDWSDHALWWEKKKTWLLKTHWTLDK) are interaction with membranes containing phosphatidylinositol phosphate. A disordered region spans residues 141–163 (LRKPRDPKKKKKKLEDAEEETLE). The FERM domain occupies 279–577 (DLNPKYDAIR…SLPEFGITHF (299 aa)). The PH domain occupies 378-474 (KVFKPKKLTL…WMAACRLASK (97 aa)). Lys-381 serves as a coordination point for a 1,2-diacyl-sn-glycero-3-phospho-(1D-myo-inositol-3,4,5-trisphosphate).

It belongs to the kindlin family.

The protein resides in the cytoplasm. It localises to the cell cortex. It is found in the cytoskeleton. The protein localises to the stress fiber. Its subcellular location is the cell junction. The protein resides in the focal adhesion. It localises to the membrane. It is found in the cell projection. The protein localises to the lamellipodium membrane. Its subcellular location is the nucleus. The protein resides in the myofibril. It localises to the sarcomere. It is found in the i band. The protein localises to the cell surface. Its function is as follows. Scaffolding protein that enhances integrin activation mediated by TLN1 and/or TLN2, but activates integrins only weakly by itself. Binds to membranes enriched in phosphoinositides. Enhances integrin-mediated cell adhesion onto the extracellular matrix and cell spreading; this requires both its ability to interact with integrins and with phospholipid membranes. Required for the assembly of focal adhesions. Participates in the connection between extracellular matrix adhesion sites and the actin cytoskeleton and also in the orchestration of actin assembly and cell shape modulation. Plays a role in the TGFB1 and integrin signaling pathways. Stabilizes active CTNNB1 and plays a role in the regulation of transcription mediated by CTNNB1 and TCF7L2/TCF4 and in Wnt signaling. Required for normal embryonic development, including normal heart morphogenesis and normal angiogenesis. The chain is Fermitin family homolog 2 (fermt2) from Danio rerio (Zebrafish).